The sequence spans 524 residues: 2-isopropylmalate synthase (524 aa).

Residues 5-267 form the Pyruvate carboxyltransferase domain; sequence VIIFDTTLRD…HTNINHQEIF (263 aa). Positions 14, 202, 204, and 238 each coordinate Mn(2+). The regulatory domain stretch occupies residues 392 to 524; the sequence is SLDYFSVQSG…SKHQNNQETV (133 aa).

This sequence belongs to the alpha-IPM synthase/homocitrate synthase family. LeuA type 1 subfamily. As to quaternary structure, homodimer. The cofactor is Mn(2+).

Its subcellular location is the cytoplasm. It carries out the reaction 3-methyl-2-oxobutanoate + acetyl-CoA + H2O = (2S)-2-isopropylmalate + CoA + H(+). It participates in amino-acid biosynthesis; L-leucine biosynthesis; L-leucine from 3-methyl-2-oxobutanoate: step 1/4. Functionally, catalyzes the condensation of the acetyl group of acetyl-CoA with 3-methyl-2-oxobutanoate (2-ketoisovalerate) to form 3-carboxy-3-hydroxy-4-methylpentanoate (2-isopropylmalate). In Serratia proteamaculans (strain 568), this protein is 2-isopropylmalate synthase.